Here is a 98-residue protein sequence, read N- to C-terminus: HssA/B-like protein 34 (98 aa).

Disordered regions lie at residues 1–26 (MTLF…SFGS) and 60–98 (AKSS…SCSC). The segment covering 60-72 (AKSSGGSCGGKGG) has biased composition (gly residues). The span at 73 to 88 (SHNHGHGHGHGPHGHG) shows a compositional bias: basic residues. The span at 89 to 98 (GKGSGGSCSC) shows a compositional bias: gly residues.

It belongs to the hssA/B family.

The sequence is that of HssA/B-like protein 34 (hssl34) from Dictyostelium discoideum (Social amoeba).